We begin with the raw amino-acid sequence, 454 residues long: Tubulin gamma chain (454 aa).

142–148 (AGGTGSG) provides a ligand contact to GTP.

The protein belongs to the tubulin family.

It localises to the cytoplasm. The protein resides in the cytoskeleton. The protein localises to the microtubule organizing center. It is found in the spindle pole body. Its function is as follows. Tubulin is the major constituent of microtubules. The gamma chain is found at microtubule organizing centers (MTOC) such as the spindle pole or the centrosome, suggesting that it is involved in the minus-end nucleation of microtubule assembly. Interacts physically with beta-tubulin and is involved in microtubule function. In Emericella nidulans (strain FGSC A4 / ATCC 38163 / CBS 112.46 / NRRL 194 / M139) (Aspergillus nidulans), this protein is Tubulin gamma chain (mipA).